Consider the following 257-residue polypeptide: Pyrroline-5-carboxylate reductase (257 aa).

Belongs to the pyrroline-5-carboxylate reductase family.

It is found in the cytoplasm. It carries out the reaction L-proline + NADP(+) = (S)-1-pyrroline-5-carboxylate + NADPH + 2 H(+). The enzyme catalyses L-proline + NAD(+) = (S)-1-pyrroline-5-carboxylate + NADH + 2 H(+). It participates in amino-acid biosynthesis; L-proline biosynthesis; L-proline from L-glutamate 5-semialdehyde: step 1/1. In terms of biological role, catalyzes the reduction of 1-pyrroline-5-carboxylate (PCA) to L-proline. This chain is Pyrroline-5-carboxylate reductase, found in Helicobacter pylori (strain ATCC 700392 / 26695) (Campylobacter pylori).